The chain runs to 267 residues: tRNA (guanine-N(1)-)-methyltransferase (267 aa).

Residues Gly112 and 131 to 136 (IGDYIL) contribute to the S-adenosyl-L-methionine site. Residues 245–259 (DRRKEKNSYEDEFNR) show a composition bias toward basic and acidic residues. The segment at 245 to 267 (DRRKEKNSYEDEFNRRNYKRSTS) is disordered.

The protein belongs to the RNA methyltransferase TrmD family. In terms of assembly, homodimer.

The protein resides in the cytoplasm. The enzyme catalyses guanosine(37) in tRNA + S-adenosyl-L-methionine = N(1)-methylguanosine(37) in tRNA + S-adenosyl-L-homocysteine + H(+). Its function is as follows. Specifically methylates guanosine-37 in various tRNAs. The polypeptide is tRNA (guanine-N(1)-)-methyltransferase (Spiroplasma kunkelii).